We begin with the raw amino-acid sequence, 203 residues long: Small ribosomal subunit protein uS4c (203 aa).

Residues 91–159 form the S4 RNA-binding domain; that stretch reads MRLDNIIFRL…ISKNIEFYQK (69 aa).

The protein belongs to the universal ribosomal protein uS4 family. In terms of assembly, part of the 30S ribosomal subunit. Contacts protein S5. The interaction surface between S4 and S5 is involved in control of translational fidelity.

Its subcellular location is the plastid. The protein resides in the chloroplast. One of the primary rRNA binding proteins, it binds directly to 16S rRNA where it nucleates assembly of the body of the 30S subunit. Its function is as follows. With S5 and S12 plays an important role in translational accuracy. This chain is Small ribosomal subunit protein uS4c (rps4), found in Lopidium concinnum (Moss).